A 361-amino-acid chain; its full sequence is Protein SGT1 homolog (361 aa).

TPR repeat units follow at residues 3-36 (ASDL…GPAT), 37-70 (ADLY…DPTM), and 71-104 (HKAY…APGD). Residue threonine 150 is modified to Phosphothreonine. The 90-residue stretch at 159-248 (KPKYRHDYYN…AEQVTWTTLD (90 aa)) folds into the CS domain. The tract at residues 255–295 (AIPQKISTPAETAPRPSYPSSKSKKDWDKLEAEVKKEEKEE) is disordered. A Phosphothreonine modification is found at threonine 262. The SGS domain occupies 271–361 (SYPSSKSKKD…DGMELKKWEI (91 aa)). Basic and acidic residues predominate over residues 277–295 (SKKDWDKLEAEVKKEEKEE).

Belongs to the SGT1 family. In terms of processing, constitutively phosphorylated at Thr-262 and phosphorylated at Thr-150 upon infection with the fungal pathogen Ustilago maydis.

Its subcellular location is the cytoplasm. It localises to the nucleus. May act as positive regulator of basal defense. May be involved in basal disease resistance to the fungal pathogen Ustilago maydis. The polypeptide is Protein SGT1 homolog (Zea mays (Maize)).